A 209-amino-acid polypeptide reads, in one-letter code: GTP-binding nuclear protein Ran1A (209 aa).

Positions 1-162 constitute a Small GTPase Ran-type domain; sequence NFKLVIVGDG…LYLARKLAGD (162 aa). 9–16 serves as a coordination point for GTP; sequence DGGTGKTT. Residues 28–36 form a switch-I region; the sequence is KKYEPTIGV. GTP is bound by residues glycine 59, 113-116, and 141-143; these read NKVD and SAK. Residues 59–75 form a switch-II region; sequence GQEKFGGLRDGYYIHGQ. Residues 187–196 are compositionally biased toward low complexity; that stretch reads QHEAELAQAA. Residues 187 to 209 form a disordered region; sequence QHEAELAQAASQPLPDDDDDAFD.

The protein belongs to the small GTPase superfamily. Ran family. In terms of assembly, found in a nuclear export complex with RanGTP, exportin and pre-miRNA.

The protein resides in the nucleus. Functionally, GTP-binding protein involved in nucleocytoplasmic transport. Required for the import of protein into the nucleus and also for RNA export. Involved in chromatin condensation and control of cell cycle. This chain is GTP-binding nuclear protein Ran1A (RAN1A), found in Lotus japonicus (Lotus corniculatus var. japonicus).